We begin with the raw amino-acid sequence, 329 residues long: Acetyl-coenzyme A carboxylase carboxyl transferase subunit alpha (329 aa).

Residues Q40–E294 enclose the CoA carboxyltransferase C-terminal domain.

The protein belongs to the AccA family. As to quaternary structure, acetyl-CoA carboxylase is a heterohexamer composed of biotin carboxyl carrier protein (AccB), biotin carboxylase (AccC) and two subunits each of ACCase subunit alpha (AccA) and ACCase subunit beta (AccD).

It localises to the cytoplasm. The enzyme catalyses N(6)-carboxybiotinyl-L-lysyl-[protein] + acetyl-CoA = N(6)-biotinyl-L-lysyl-[protein] + malonyl-CoA. The protein operates within lipid metabolism; malonyl-CoA biosynthesis; malonyl-CoA from acetyl-CoA: step 1/1. Its function is as follows. Component of the acetyl coenzyme A carboxylase (ACC) complex. First, biotin carboxylase catalyzes the carboxylation of biotin on its carrier protein (BCCP) and then the CO(2) group is transferred by the carboxyltransferase to acetyl-CoA to form malonyl-CoA. This chain is Acetyl-coenzyme A carboxylase carboxyl transferase subunit alpha, found in Prochlorococcus marinus (strain MIT 9313).